We begin with the raw amino-acid sequence, 316 residues long: Remorin 4.1 (316 aa).

3 disordered regions span residues 1-108, 125-202, and 267-287; these read MLSE…PSEL, NANA…SVGQ, and AQNEVAKARRKAEEKRASAEA. Positions 40-53 are enriched in acidic residues; it reads EREEEVVVEEELEE. A compositionally biased stretch (polar residues) spans 92 to 104; sequence RHTSIRSVGSDTA. The span at 125 to 135 shows a compositional bias: low complexity; the sequence is NANAAAAAAAN. Basic and acidic residues-rich tracts occupy residues 143–153 and 277–287; these read GVDDALGRIGE and KAEEKRASAEA. Positions 242–288 form a coiled coil; sequence VEKANAWLKKYERKLEEKRAKAMEKAQNEVAKARRKAEEKRASAEAK.

This sequence belongs to the remorin family. Interacts with BAK1. Post-translationally, phosphorylated by BRI1. Phosphorylation reduces the binding affinity to BAK1. As to expression, expressed in roots, leaf blades and leaf sheaths. Expressed at low levels in stems and spikelets.

It is found in the cell membrane. Functionally, functions in abscisic acid (ABA) signaling downstream of BZIP23. Acts as antagonistic and negative regulator of brassinosteroid (BR) signaling. Binds to BAK1 and inhibits its interaction with the BR receptor BRI1. Inhibits the formation and subsequent activation of the BRI1-BAK1 receptor complex. The chain is Remorin 4.1 from Oryza sativa subsp. japonica (Rice).